A 420-amino-acid polypeptide reads, in one-letter code: Exodeoxyribonuclease 7 large subunit (420 aa).

Belongs to the XseA family. In terms of assembly, heterooligomer composed of large and small subunits.

The protein localises to the cytoplasm. The enzyme catalyses Exonucleolytic cleavage in either 5'- to 3'- or 3'- to 5'-direction to yield nucleoside 5'-phosphates.. In terms of biological role, bidirectionally degrades single-stranded DNA into large acid-insoluble oligonucleotides, which are then degraded further into small acid-soluble oligonucleotides. This is Exodeoxyribonuclease 7 large subunit from Helicobacter pylori (strain Shi470).